We begin with the raw amino-acid sequence, 709 residues long: Rho guanine nucleotide exchange factor 16 (709 aa).

Position 2 is an N-acetylalanine (A2). Phosphoserine is present on residues S6, S41, and S107. The tract at residues 22 to 70 (ELRLDAGGNPASGLPMVRGSPRVRDDAAFQPQVPAPPQPRPPGHEEPWP) is disordered. Residues 114–146 (SREAARRDPKLLPAPSFSLDDMDVDKDPGGMLR) are disordered. Phosphoserine is present on residues S174, S191, and S208. Residues 180–246 (LAEEPSQPHT…ESSSPEGTQK (67 aa)) form a disordered region. The span at 191 to 207 (SPAKNKKTLGRKRGHKG) shows a compositional bias: basic residues. T226 carries the phosphothreonine modification. 3 positions are modified to phosphoserine: S227, S230, and S240. A required for RHOG activation and mediates interaction with EPHA2 region spans residues 275-481 (LDQLSTEERK…MERMEQMYTL (207 aa)). Positions 284–468 (KRQEAMFEIL…SKLVRQCNEG (185 aa)) constitute a DH domain. The PH domain occupies 501–620 (WLLKRGELFL…WIVALTHSER (120 aa)). The SH3 domain maps to 629 to 689 (GDLPQVEITK…PEDFARFITS (61 aa)). The short motif at 707 to 709 (TDV) is the PDZ-binding motif element.

In terms of assembly, interacts with ELMO2, EPHA2, RAC1 and RHOG; mediates activation of RAC1 by EPHA2. Interacts with TAX1BP3 (via PDZ domain). May interact with CDC42; stimulated by HPV16 E6.

It localises to the cytoplasm. Functionally, guanyl-nucleotide exchange factor of the RHOG GTPase stimulating the exchange of RHOG-associated GDP for GTP. May play a role in chemotactic cell migration by mediating the activation of RAC1 by EPHA2. May also activate CDC42 and mediate activation of CDC42 by the viral protein HPV16 E6. This chain is Rho guanine nucleotide exchange factor 16 (ARHGEF16), found in Homo sapiens (Human).